The chain runs to 310 residues: Methionyl-tRNA formyltransferase (310 aa).

Position 111-114 (111-114 (SILP)) interacts with (6S)-5,6,7,8-tetrahydrofolate.

The protein belongs to the Fmt family.

It catalyses the reaction L-methionyl-tRNA(fMet) + (6R)-10-formyltetrahydrofolate = N-formyl-L-methionyl-tRNA(fMet) + (6S)-5,6,7,8-tetrahydrofolate + H(+). In terms of biological role, attaches a formyl group to the free amino group of methionyl-tRNA(fMet). The formyl group appears to play a dual role in the initiator identity of N-formylmethionyl-tRNA by promoting its recognition by IF2 and preventing the misappropriation of this tRNA by the elongation apparatus. This is Methionyl-tRNA formyltransferase from Methylobacterium sp. (strain 4-46).